The sequence spans 297 residues: Bifunctional protein FolD (297 aa).

NADP(+) is bound by residues 169-171, serine 196, and isoleucine 237; that span reads GRS.

The protein belongs to the tetrahydrofolate dehydrogenase/cyclohydrolase family. As to quaternary structure, homodimer.

The catalysed reaction is (6R)-5,10-methylene-5,6,7,8-tetrahydrofolate + NADP(+) = (6R)-5,10-methenyltetrahydrofolate + NADPH. The enzyme catalyses (6R)-5,10-methenyltetrahydrofolate + H2O = (6R)-10-formyltetrahydrofolate + H(+). It functions in the pathway one-carbon metabolism; tetrahydrofolate interconversion. Its function is as follows. Catalyzes the oxidation of 5,10-methylenetetrahydrofolate to 5,10-methenyltetrahydrofolate and then the hydrolysis of 5,10-methenyltetrahydrofolate to 10-formyltetrahydrofolate. In Salinibacter ruber (strain DSM 13855 / M31), this protein is Bifunctional protein FolD.